A 517-amino-acid chain; its full sequence is RNA-binding region-containing protein 3 (517 aa).

The interval 1–26 is disordered; it reads MAAPEQPLAISRGCTSSSSLSPPRGD. Residues 1-257 form a necessary for interaction with PDCD7 region; the sequence is MAAPEQPLAI…STDDEDRQRM (257 aa). Residue S21 is modified to Phosphoserine. One can recognise an RRM 1 domain in the interval 27 to 102; the sequence is RTLLVRHLPA…HTLVVEFAKE (76 aa). Disordered regions lie at residues 106–130 and 213–254; these read VHSP…DDKE and MPLH…DEDR. Phosphoserine is present on S108. The segment covering 115–130 has biased composition (basic and acidic residues); the sequence is SEKKKRSDDPVEDDKE. The interval 211–380 is necessary for binding to m(7)G-capped U12 snRNA; the sequence is DYMPLHAPLP…LDITEEIKED (170 aa). Over residues 217 to 230 the composition is skewed to pro residues; that stretch reads APLPPTSPQPPEEP. The segment covering 231–252 has biased composition (acidic residues); that stretch reads PLPDEDEELSSEESEYESTDDE. Residues 420 to 503 enclose the RRM 2 domain; sequence CRIYVKNLAK…KPMVVQFARS (84 aa).

As to quaternary structure, component of the U11/U12 snRNPs that are part of the U12-type spliceosome. Found in a complex with m(7)G-capped U12 snRNA. Interacts with PDCD7. In terms of tissue distribution, highly expressed in pancreas and kidney. Detected at lower levels in heart, brain, placenta, lung, liver, spleen, thymus, prostate, testis, ovary, small intestine, colon and leukocytes.

The protein localises to the nucleus. Functionally, participates in pre-mRNA U12-dependent splicing, performed by the minor spliceosome which removes U12-type introns. U12-type introns comprises less than 1% of all non-coding sequences. Binds to the 3'-stem-loop of m(7)G-capped U12 snRNA. The polypeptide is RNA-binding region-containing protein 3 (RNPC3) (Homo sapiens (Human)).